The following is a 261-amino-acid chain: Probable RNA-binding protein ARP1 (261 aa).

The region spanning 17–94 (TKVFVGGLAW…RRANCNLASL (78 aa)) is the RRM domain. A disordered region spans residues 96–122 (GRLRKSPTMTSPQQGPKNGNRATPPHV). Positions 102 to 116 (PTMTSPQQGPKNGNR) are enriched in polar residues.

Expressed in vasculature of leaves, roots and siliques.

Its subcellular location is the nucleus. Its function is as follows. Probable RNA-binding protein involved in the regulation of abscisic acid (ABA) response during seed germination. May regulate transcript levels of several germination-responsive genes under ABA. In Arabidopsis thaliana (Mouse-ear cress), this protein is Probable RNA-binding protein ARP1.